The following is a 524-amino-acid chain: 2-isopropylmalate synthase (524 aa).

A Pyruvate carboxyltransferase domain is found at 5–267 (VIIFDTTLRD…HTNIRHSEIH (263 aa)). The Mn(2+) site is built by Asp14, His202, His204, and Asn238. A regulatory domain region spans residues 392-524 (KLEYLGVQSG…KTDKINTESV (133 aa)).

Belongs to the alpha-IPM synthase/homocitrate synthase family. LeuA type 1 subfamily. In terms of assembly, homodimer. Mn(2+) serves as cofactor.

The protein localises to the cytoplasm. The catalysed reaction is 3-methyl-2-oxobutanoate + acetyl-CoA + H2O = (2S)-2-isopropylmalate + CoA + H(+). The protein operates within amino-acid biosynthesis; L-leucine biosynthesis; L-leucine from 3-methyl-2-oxobutanoate: step 1/4. Functionally, catalyzes the condensation of the acetyl group of acetyl-CoA with 3-methyl-2-oxobutanoate (2-ketoisovalerate) to form 3-carboxy-3-hydroxy-4-methylpentanoate (2-isopropylmalate). The chain is 2-isopropylmalate synthase from Aeromonas hydrophila subsp. hydrophila (strain ATCC 7966 / DSM 30187 / BCRC 13018 / CCUG 14551 / JCM 1027 / KCTC 2358 / NCIMB 9240 / NCTC 8049).